Consider the following 449-residue polypeptide: Ribosomal protein uS12 methylthiotransferase RimO (449 aa).

Positions 15–125 (PRISFVSLGC…VLAAVHEAVP (111 aa)) constitute an MTTase N-terminal domain. [4Fe-4S] cluster-binding residues include C24, C60, C89, C156, C160, and C163. One can recognise a Radical SAM core domain in the interval 142–379 (LTPRHYAYLK…MRTQQKVSAR (238 aa)). The TRAM domain occupies 382–448 (KRKVGTRQSV…PYDLSGTAVG (67 aa)).

Belongs to the methylthiotransferase family. RimO subfamily. The cofactor is [4Fe-4S] cluster.

Its subcellular location is the cytoplasm. The catalysed reaction is L-aspartate(89)-[ribosomal protein uS12]-hydrogen + (sulfur carrier)-SH + AH2 + 2 S-adenosyl-L-methionine = 3-methylsulfanyl-L-aspartate(89)-[ribosomal protein uS12]-hydrogen + (sulfur carrier)-H + 5'-deoxyadenosine + L-methionine + A + S-adenosyl-L-homocysteine + 2 H(+). Functionally, catalyzes the methylthiolation of an aspartic acid residue of ribosomal protein uS12. This Xanthobacter autotrophicus (strain ATCC BAA-1158 / Py2) protein is Ribosomal protein uS12 methylthiotransferase RimO.